Consider the following 262-residue polypeptide: R3H domain-containing protein 4 (262 aa).

Disordered regions lie at residues 1 to 27 (MVALDNSEGGPEATPSGETRLSLPGCL) and 132 to 155 (YLEDESQGKRRRGPGRGEDRRRED). A compositionally biased stretch (basic and acidic residues) spans 146–155 (GRGEDRRRED). Positions 182-245 (METLESWEER…RRQMKVSNRH (64 aa)) constitute an R3H domain.

It localises to the nucleus. In Mus musculus (Mouse), this protein is R3H domain-containing protein 4 (R3hdm4).